The sequence spans 714 residues: Ribonucleoside-diphosphate reductase 2 subunit alpha (714 aa).

Residues Thr-161, Ser-177–Cys-178, Gly-206, Asn-386–Glu-390, and Pro-588–Ile-592 contribute to the substrate site. A disulfide bridge links Cys-178 with Cys-415. Asn-386 serves as the catalytic Proton acceptor. Residue Cys-388 is the Cysteine radical intermediate of the active site. Glu-390 (proton acceptor) is an active-site residue.

It belongs to the ribonucleoside diphosphate reductase large chain family. Tetramer of two alpha and two beta subunits.

It carries out the reaction a 2'-deoxyribonucleoside 5'-diphosphate + [thioredoxin]-disulfide + H2O = a ribonucleoside 5'-diphosphate + [thioredoxin]-dithiol. With respect to regulation, under complex allosteric control mediated by deoxynucleoside triphosphates and ATP binding. The type of nucleotide bound at the specificity site determines substrate preference. It seems probable that ATP makes the enzyme reduce CDP and UDP, dGTP favors ADP reduction and dTTP favors GDP reduction. Its function is as follows. Provides the precursors necessary for DNA synthesis. Catalyzes the biosynthesis of deoxyribonucleotides from the corresponding ribonucleotides. R1E contains the binding sites for both substrates and allosteric effectors and carries out the actual reduction of the ribonucleotide. This chain is Ribonucleoside-diphosphate reductase 2 subunit alpha (nrdE), found in Escherichia coli (strain K12).